We begin with the raw amino-acid sequence, 374 residues long: AA14 family lytic polysaccharide monooxygenase B (374 aa).

Residues 1-18 (MIPVFLAAIAVFLPLTSG) form the signal peptide. 4 N-linked (GlcNAc...) asparagine glycosylation sites follow: Asn31, Asn49, Asn94, and Asn151. Cystine bridges form between Cys85–Cys108, Cys127–Cys154, Cys171–Cys176, Cys178–Cys200, and Cys220–Cys236. Asn235 and Asn315 each carry an N-linked (GlcNAc...) asparagine glycan. Residues 306 to 374 (ISNATPAPSN…TQSRKMRYVF (69 aa)) form a disordered region. Low complexity predominate over residues 313–344 (PSNGSCSSRPPSSPVSSSAASTTTSRSPRPSA).

Belongs to the polysaccharide monooxygenase AA14 family. Requires Cu(2+) as cofactor.

The protein localises to the secreted. In terms of biological role, lytic polysaccharide monooxygenase (LPMO) that oxidatively cleaves xylan with both C1 and C4 regioselectivity and that specifically targets the protective shield made by heteroxylans that cover cellulose microfibrils in wood. Catalysis by LPMOs requires the reduction of the active-site copper from Cu(II) to Cu(I) by a reducing agent and H(2)O(2) or O(2) as a cosubstrate. Cleavage occurs only when xylans are bound to cellulose and not when they are in solution. Increases the efficiency of wood saccharification through oxidative cleavage of highly refractory xylan-coated cellulose fibers via synergistic relationship with xylan-active enzymes, xylobiohydrolases and cellobiohydrolases. The protein is AA14 family lytic polysaccharide monooxygenase B of Pycnoporus cinnabarinus (Cinnabar-red polypore).